We begin with the raw amino-acid sequence, 823 residues long: Ubiquitin carboxyl-terminal hydrolase 16 (823 aa).

The UBP-type zinc-finger motif lies at 22 to 142; the sequence is PVCRHIRKGL…QVVDYVRKQA (121 aa). Zn(2+) contacts are provided by Cys-24, His-26, Cys-48, Cys-51, Cys-74, Cys-77, Cys-82, His-90, His-94, His-103, Cys-116, and Cys-119. Residue Lys-140 forms a Glycyl lysine isopeptide (Lys-Gly) (interchain with G-Cter in SUMO2) linkage. A disordered region spans residues 146–189; sequence TPKPAEKDNGNIELENKKLEKESKNEQEREKKENMAKENPPMNS. Basic and acidic residues predominate over residues 149–181; the sequence is PAEKDNGNIELENKKLEKESKNEQEREKKENMA. Ser-189 is modified (phosphoserine). One can recognise a USP domain in the interval 196-822; that stretch reads KGLSNLGNTC…QAYLLFYERI (627 aa). Cys-205 (nucleophile) is an active-site residue. Positions 394–408 are enriched in basic and acidic residues; it reads SGKKSVNDKNLKKTV. A disordered region spans residues 394-460; that stretch reads SGKKSVNDKN…AKNQRRQQKI (67 aa). Positions 409 to 420 are enriched in acidic residues; it reads EDEDQDSEEEKD. Position 415 is a phosphoserine (Ser-415). A compositionally biased stretch (basic and acidic residues) spans 421 to 430; the sequence is NDSYIKERSD. Over residues 438 to 458 the composition is skewed to basic residues; the sequence is HLQKKAKKQAKKQAKNQRRQQ. Phosphoserine occurs at positions 531 and 552. Thr-554 is modified (phosphothreonine). His-758 functions as the Proton acceptor in the catalytic mechanism.

It belongs to the peptidase C19 family. USP16 subfamily. As to quaternary structure, homotetramer. Associates with late pre-40S ribosomes. Interacts with CEP78; promoting deubiquitination of tektins. In terms of processing, phosphorylated at the onset of mitosis and dephosphorylated during the metaphase/anaphase transition. Phosphorylation by AURKB enhances the deubiquitinase activity. Present in all the tissues examined including fetal brain, lung, liver, kidney, and adult heart, brain, placenta, lung, liver, skeletal muscle, kidney and pancreas.

Its subcellular location is the nucleus. The protein localises to the cytoplasm. The catalysed reaction is Thiol-dependent hydrolysis of ester, thioester, amide, peptide and isopeptide bonds formed by the C-terminal Gly of ubiquitin (a 76-residue protein attached to proteins as an intracellular targeting signal).. Functionally, specifically deubiquitinates 'Lys-120' of histone H2A (H2AK119Ub), a specific tag for epigenetic transcriptional repression, thereby acting as a coactivator. Deubiquitination of histone H2A is a prerequisite for subsequent phosphorylation at 'Ser-11' of histone H3 (H3S10ph), and is required for chromosome segregation when cells enter into mitosis. In resting B- and T-lymphocytes, phosphorylation by AURKB leads to enhance its activity, thereby maintaining transcription in resting lymphocytes. Regulates Hox gene expression via histone H2A deubiquitination. Prefers nucleosomal substrates. Does not deubiquitinate histone H2B. Also deubiquitinates non-histone proteins, such as ribosomal protein RPS27A: deubiquitination of monoubiquitinated RPS27A promotes maturation of the 40S ribosomal subunit. Also mediates deubiquitination of tektin proteins (TEKT1, TEKT2, TEK3, TEKT4 and TEKT5), promoting their stability. This is Ubiquitin carboxyl-terminal hydrolase 16 from Homo sapiens (Human).